Reading from the N-terminus, the 1547-residue chain is Transposon Ty3-G Gag-Pol polyprotein (1547 aa).

N-acetylserine is present on serine 2. The segment at 265–282 (RLCFYCKKEGHRLNECRA) adopts a CCHC-type zinc-finger fold. The For protease activity; shared with dimeric partner role is filled by aspartate 336. Residues 620–797 (LDNKFIVPSK…EETEFLGYSI (178 aa)) form the Reverse transcriptase domain. Mg(2+) is bound by residues aspartate 686, aspartate 748, aspartate 749, aspartate 893, glutamate 936, and aspartate 961. The RNase H Ty3/gyspy-type domain maps to 893–1011 (DASKDGIGAV…VADAISRAVY (119 aa)). An integrase-type zinc finger-like region spans residues 1106–1145 (HTLFGGHFGVTVTLAKISPIYYWPKLQHSIIQYIRTCVQC). Residues 1159-1324 (LQPLPIAEGR…SPFEIDLGYL (166 aa)) enclose the Integrase catalytic domain. Residues aspartate 1175 and aspartate 1236 each contribute to the Mg(2+) site.

The protease is a homodimer, whose active site consists of two apposed aspartic acid residues. Initially, virus-like particles (VLPs) are composed of the structural unprocessed proteins Gag and Gag-Pol, and also contain the host initiator methionine tRNA (tRNA(i)-Met) which serves as a primer for minus-strand DNA synthesis, and a dimer of genomic Ty RNA. Processing of the polyproteins occurs within the particle and proceeds by an ordered pathway, called maturation. First, the protease (PR) is released by autocatalytic cleavage of the Gag-Pol polyprotein, and this cleavage is a prerequisite for subsequent processing at the remaining sites to release the mature structural and catalytic proteins. Maturation takes place prior to the RT reaction and is required to produce transposition-competent VLPs.

Its subcellular location is the cytoplasm. It is found in the nucleus. The enzyme catalyses DNA(n) + a 2'-deoxyribonucleoside 5'-triphosphate = DNA(n+1) + diphosphate. It carries out the reaction Endonucleolytic cleavage to 5'-phosphomonoester.. Functionally, capsid protein (CA) is the structural component of the virus-like particle (VLP), forming the shell that encapsulates the genomic RNA-nucleocapsid complex. In terms of biological role, nucleocapsid protein p11 (NC) forms the nucleocore that coats the retro-elements dimeric RNA. Binds these RNAs through its zinc fingers. Promotes primer tRNA(i)-Met annealing to the multipartite primer-binding site (PBS), dimerization of Ty3 RNA and initiation of reverse transcription. Its function is as follows. The aspartyl protease (PR) mediates the proteolytic cleavages of the Gag and Gag-Pol polyproteins after assembly of the VLP. Reverse transcriptase/ribonuclease H (RT) is a multifunctional enzyme that catalyzes the conversion of the retro-elements RNA genome into dsDNA within the VLP. The enzyme displays a DNA polymerase activity that can copy either DNA or RNA templates, and a ribonuclease H (RNase H) activity that cleaves the RNA strand of RNA-DNA heteroduplexes during plus-strand synthesis and hydrolyzes RNA primers. The conversion leads to a linear dsDNA copy of the retrotransposon that includes long terminal repeats (LTRs) at both ends. Functionally, integrase (IN) targets the VLP to the nucleus, where a subparticle preintegration complex (PIC) containing at least integrase and the newly synthesized dsDNA copy of the retrotransposon must transit the nuclear membrane. Once in the nucleus, integrase performs the integration of the dsDNA into the host genome. In Saccharomyces cerevisiae (strain ATCC 204508 / S288c) (Baker's yeast), this protein is Transposon Ty3-G Gag-Pol polyprotein (TY3B-G).